Here is a 452-residue protein sequence, read N- to C-terminus: Protein tipE (452 aa).

At Met1 to Ala20 the chain is on the cytoplasmic side. A helical membrane pass occupies residues Phe21–Ile41. Over Glu42–Thr274 the chain is Extracellular. N-linked (GlcNAc...) asparagine glycans are attached at residues Asn72, Asn102, Asn108, Asn212, and Asn237. The chain crosses the membrane as a helical span at residues Leu275 to Leu295. The Cytoplasmic segment spans residues Thr296–Val452. Polar residues predominate over residues Ala423–Thr444. Residues Ala423 to Val452 form a disordered region.

Preferentially expressed in the central nervous system of developing embryos, weaker expression is seen in the peripheral nervous system. In pupae and adults, expression is seen predominantly in heads, body and legs.

It is found in the membrane. In terms of biological role, enhances para sodium channel function. Required during pupal development to rescue adult paralysis and also protects adult flies against heat-induced lethality. This is Protein tipE (tipE) from Drosophila melanogaster (Fruit fly).